Reading from the N-terminus, the 457-residue chain is Siroheme synthase (457 aa).

The interval 4–202 (LPIFCQLRDR…ANADEKAVNA (199 aa)) is precorrin-2 dehydrogenase /sirohydrochlorin ferrochelatase. NAD(+) contacts are provided by residues 22–23 (DV) and 43–44 (LT). Ser128 is modified (phosphoserine). The interval 216-448 (GEVVLVGAGP…IIVGRVVALR (233 aa)) is uroporphyrinogen-III C-methyltransferase. S-adenosyl-L-methionine is bound at residue Pro225. Residue Asp248 is the Proton acceptor of the active site. Lys270 acts as the Proton donor in catalysis. S-adenosyl-L-methionine-binding positions include 301-303 (GGD), Ile306, 331-332 (TA), Met382, Gly411, and Ala437.

This sequence in the N-terminal section; belongs to the precorrin-2 dehydrogenase / sirohydrochlorin ferrochelatase family. It in the C-terminal section; belongs to the precorrin methyltransferase family. Homodimer.

It carries out the reaction uroporphyrinogen III + 2 S-adenosyl-L-methionine = precorrin-2 + 2 S-adenosyl-L-homocysteine + H(+). The enzyme catalyses precorrin-2 + NAD(+) = sirohydrochlorin + NADH + 2 H(+). The catalysed reaction is siroheme + 2 H(+) = sirohydrochlorin + Fe(2+). It functions in the pathway cofactor biosynthesis; adenosylcobalamin biosynthesis; precorrin-2 from uroporphyrinogen III: step 1/1. It participates in cofactor biosynthesis; adenosylcobalamin biosynthesis; sirohydrochlorin from precorrin-2: step 1/1. The protein operates within porphyrin-containing compound metabolism; siroheme biosynthesis; precorrin-2 from uroporphyrinogen III: step 1/1. Its pathway is porphyrin-containing compound metabolism; siroheme biosynthesis; siroheme from sirohydrochlorin: step 1/1. It functions in the pathway porphyrin-containing compound metabolism; siroheme biosynthesis; sirohydrochlorin from precorrin-2: step 1/1. In terms of biological role, multifunctional enzyme that catalyzes the SAM-dependent methylations of uroporphyrinogen III at position C-2 and C-7 to form precorrin-2 via precorrin-1. Then it catalyzes the NAD-dependent ring dehydrogenation of precorrin-2 to yield sirohydrochlorin. Finally, it catalyzes the ferrochelation of sirohydrochlorin to yield siroheme. In Salmonella typhimurium (strain LT2 / SGSC1412 / ATCC 700720), this protein is Siroheme synthase.